Consider the following 117-residue polypeptide: Large ribosomal subunit protein uL18 (117 aa).

Belongs to the universal ribosomal protein uL18 family. In terms of assembly, part of the 50S ribosomal subunit; part of the 5S rRNA/L5/L18/L25 subcomplex. Contacts the 5S and 23S rRNAs.

In terms of biological role, this is one of the proteins that bind and probably mediate the attachment of the 5S RNA into the large ribosomal subunit, where it forms part of the central protuberance. The chain is Large ribosomal subunit protein uL18 from Leuconostoc mesenteroides subsp. mesenteroides (strain ATCC 8293 / DSM 20343 / BCRC 11652 / CCM 1803 / JCM 6124 / NCDO 523 / NBRC 100496 / NCIMB 8023 / NCTC 12954 / NRRL B-1118 / 37Y).